Consider the following 222-residue polypeptide: Abasic site processing protein YedK (222 aa).

Residue C2 is the Nucleophile of the active site. C2 is modified (thiazolidine linkage to a ring-opened DNA abasic site). The active site involves E105.

Belongs to the SOS response-associated peptidase family.

With respect to regulation, formation and reversal of DNA-protein cross-link depends on DNA context. Catalyzes formation of the thiazolidine linkage in presence of abasic sites in single-stranded DNA. Mediates the reversal of the thiazolidine cross-link in presence of double stranded DNA. In terms of biological role, sensor of abasic sites in single-stranded DNA (ssDNA) required to preserve genome integrity by promoting error-free repair of abasic sites. Recognizes and binds abasic sites in ssDNA at replication forks and chemically modifies the lesion by forming a covalent cross-link with DNA: forms a stable thiazolidine linkage between a ring-opened abasic site and the alpha-amino and sulfhydryl substituents of its N-terminal catalytic cysteine residue. The DNA-protein cross-link is then reversed: able to catalyze the reversal of the thiazolidine cross-link and cycle between a cross-link and a non-cross-linked state depending on DNA context: mediates self-reversal of the thiazolidine cross-link in double stranded DNA. May act as a protease: mediates autocatalytic processing of its N-terminal methionine in order to expose the catalytic cysteine. In Escherichia coli (strain K12), this protein is Abasic site processing protein YedK.